The chain runs to 738 residues: 1,4-alpha-glucan branching enzyme GlgB (738 aa).

Catalysis depends on Asp399, which acts as the Nucleophile. The Proton donor role is filled by Glu452.

The protein belongs to the glycosyl hydrolase 13 family. GlgB subfamily. In terms of assembly, monomer.

The enzyme catalyses Transfers a segment of a (1-&gt;4)-alpha-D-glucan chain to a primary hydroxy group in a similar glucan chain.. It functions in the pathway glycan biosynthesis; glycogen biosynthesis. Its function is as follows. Catalyzes the formation of the alpha-1,6-glucosidic linkages in glycogen by scission of a 1,4-alpha-linked oligosaccharide from growing alpha-1,4-glucan chains and the subsequent attachment of the oligosaccharide to the alpha-1,6 position. The chain is 1,4-alpha-glucan branching enzyme GlgB from Chlamydia trachomatis serovar L2b (strain UCH-1/proctitis).